Consider the following 169-residue polypeptide: MELYTVGKIVNTHGIRGEVKVVATTDFVDQRFADGATLYLVKKDQAPVELTVEHARMHKGLVLVKFKQFNNINEVQHFRDAELKVADQDQAELEEGQYYYHQIIGLTAETVDGRVLGKIKEILAPGANDVWVVDRKQKTDLLLPVIDDVVKEVDLAGGKVIVELLEGLE.

One can recognise a PRC barrel domain in the interval 94 to 168 (EEGQYYYHQI…KVIVELLEGL (75 aa)).

Belongs to the RimM family. As to quaternary structure, binds ribosomal protein uS19.

It localises to the cytoplasm. Its function is as follows. An accessory protein needed during the final step in the assembly of 30S ribosomal subunit, possibly for assembly of the head region. Essential for efficient processing of 16S rRNA. May be needed both before and after RbfA during the maturation of 16S rRNA. It has affinity for free ribosomal 30S subunits but not for 70S ribosomes. The protein is Ribosome maturation factor RimM of Limosilactobacillus fermentum (strain NBRC 3956 / LMG 18251) (Lactobacillus fermentum).